A 340-amino-acid polypeptide reads, in one-letter code: Glycerol-3-phosphate dehydrogenase [NAD(P)+] (340 aa).

Residues S11, W12, R32, R33, and K106 each contribute to the NADPH site. Residues K106, G138, and S140 each contribute to the sn-glycerol 3-phosphate site. Residue A142 participates in NADPH binding. 5 residues coordinate sn-glycerol 3-phosphate: K193, D246, S256, R257, and N258. K193 (proton acceptor) is an active-site residue. R257 lines the NADPH pocket. NADPH contacts are provided by V281 and E283.

This sequence belongs to the NAD-dependent glycerol-3-phosphate dehydrogenase family.

Its subcellular location is the cytoplasm. It carries out the reaction sn-glycerol 3-phosphate + NAD(+) = dihydroxyacetone phosphate + NADH + H(+). The enzyme catalyses sn-glycerol 3-phosphate + NADP(+) = dihydroxyacetone phosphate + NADPH + H(+). Its pathway is membrane lipid metabolism; glycerophospholipid metabolism. In terms of biological role, catalyzes the reduction of the glycolytic intermediate dihydroxyacetone phosphate (DHAP) to sn-glycerol 3-phosphate (G3P), the key precursor for phospholipid synthesis. The chain is Glycerol-3-phosphate dehydrogenase [NAD(P)+] from Shouchella clausii (strain KSM-K16) (Alkalihalobacillus clausii).